The primary structure comprises 62 residues: uncharacterized protein (62 aa).

Over residues 1-18 (MTTNRVDPLEQTSPNTPT) the composition is skewed to polar residues. The interval 1–24 (MTTNRVDPLEQTSPNTPTSKREKA) is disordered.

This is an uncharacterized protein from Rickettsia conorii (strain ATCC VR-613 / Malish 7).